The chain runs to 524 residues: Na(+)/H(+) antiporter NhaB (524 aa).

The next 13 membrane-spanning stretches (helical) occupy residues 23-43 (LAII…SPFV), 45-65 (GWML…CYPL), 98-118 (LLLI…LFIF), 136-156 (CVAS…AVVI), 203-223 (LMMH…VGEP), 239-259 (FFMR…LVCI), 304-324 (ALIG…VGLV), 325-345 (GLSV…HALG), 358-378 (LTVF…TPII), 392-412 (LFYL…VGTV), 420-440 (AFEL…AINT), 448-468 (ATPN…APLI), and 479-499 (ALPY…YLLV).

It belongs to the NhaB Na(+)/H(+) (TC 2.A.34) antiporter family.

It localises to the cell inner membrane. The enzyme catalyses 2 Na(+)(in) + 3 H(+)(out) = 2 Na(+)(out) + 3 H(+)(in). Its function is as follows. Na(+)/H(+) antiporter that extrudes sodium in exchange for external protons. The chain is Na(+)/H(+) antiporter NhaB from Yersinia enterocolitica serotype O:8 / biotype 1B (strain NCTC 13174 / 8081).